Here is a 285-residue protein sequence, read N- to C-terminus: MEIIKEPSALRELAGQWTRQGRSVGFVPTMGYLHAGHESLMRLARGRAETVVASVFVNPTQFGPGEDLNAYPRDLERDAALAKAAGVDVLFAPSPEAMYEPAAATWVEVPTLARHLCGASRPTHFRGVCTVVSKLFLLVRPTVAVFGQKDWQQLAILRRMNADLGFGVEIVGGPIVREADGLALSSRNVRLTPQEREQAPGINQGLALAEAMVRDGETAAGRILDAVRAHYAAHVPLGEIDYLSCVDPDSLEMVEPIDRPALFATAVRFSAVRLIDNRLAADLPR.

30–37 (MGYLHAGH) lines the ATP pocket. Residue His-37 is the Proton donor of the active site. Gln-61 is a binding site for (R)-pantoate. Gln-61 lines the beta-alanine pocket. 147–150 (GQKD) provides a ligand contact to ATP. Gln-153 is a binding site for (R)-pantoate. Residues Val-176 and 184–187 (LSSR) each bind ATP.

It belongs to the pantothenate synthetase family. Homodimer.

It is found in the cytoplasm. It carries out the reaction (R)-pantoate + beta-alanine + ATP = (R)-pantothenate + AMP + diphosphate + H(+). It participates in cofactor biosynthesis; (R)-pantothenate biosynthesis; (R)-pantothenate from (R)-pantoate and beta-alanine: step 1/1. Catalyzes the condensation of pantoate with beta-alanine in an ATP-dependent reaction via a pantoyl-adenylate intermediate. The sequence is that of Pantothenate synthetase from Solidesulfovibrio magneticus (strain ATCC 700980 / DSM 13731 / RS-1) (Desulfovibrio magneticus).